The primary structure comprises 179 residues: Ribosome maturation factor RimM (179 aa).

The PRC barrel domain occupies 95-174 (KDEFFYFDIL…QIFCTQDAFL (80 aa)).

The protein belongs to the RimM family. Binds ribosomal protein uS19.

It is found in the cytoplasm. In terms of biological role, an accessory protein needed during the final step in the assembly of 30S ribosomal subunit, possibly for assembly of the head region. Essential for efficient processing of 16S rRNA. May be needed both before and after RbfA during the maturation of 16S rRNA. It has affinity for free ribosomal 30S subunits but not for 70S ribosomes. The sequence is that of Ribosome maturation factor RimM from Campylobacter jejuni subsp. jejuni serotype O:6 (strain 81116 / NCTC 11828).